A 382-amino-acid chain; its full sequence is MAKKQKKLDEISKKFGDERQKALDNALKNIEKDFGKGAIMRLGERAEQKVQVMSSGSLALDIALGAGGYPKGRIIEIYGPESSGKTTVALHAVAQAQKEGGIAAFIDAEHALDPSYAAALGVNIDELLLSQPDSGEQGLEIAGKLIDSGAVDLVVVDSVAALVPRAEIDGDIGDSHVGLQARMMSQAMRKLSASINKTKTIAIFINQLREKVGVMFGNPETTPGGRALKFYASVRLDVRGNTQIKGTGDEKDTNVGKETKIKVVKNKVAPPFKEAFVEIMYGEGISKTGELIKIATDLDIIKKAGAWYSYNDEKIGQGSENAKKYLADHPEVFGEIDRQVRVRYGLIDGDDMAEAVGNKAESPVETLEEVTLDLDDAIEIEE.

Position 79–86 (79–86) interacts with ATP; it reads GPESSGKT.

It belongs to the RecA family.

The protein resides in the cytoplasm. Its function is as follows. Can catalyze the hydrolysis of ATP in the presence of single-stranded DNA, the ATP-dependent uptake of single-stranded DNA by duplex DNA, and the ATP-dependent hybridization of homologous single-stranded DNAs. It interacts with LexA causing its activation and leading to its autocatalytic cleavage. In Streptococcus sanguinis (strain SK36), this protein is Protein RecA.